A 588-amino-acid polypeptide reads, in one-letter code: DNA mismatch repair protein MutL (588 aa).

It belongs to the DNA mismatch repair MutL/HexB family.

Its function is as follows. This protein is involved in the repair of mismatches in DNA. It is required for dam-dependent methyl-directed DNA mismatch repair. May act as a 'molecular matchmaker', a protein that promotes the formation of a stable complex between two or more DNA-binding proteins in an ATP-dependent manner without itself being part of a final effector complex. In Fervidobacterium nodosum (strain ATCC 35602 / DSM 5306 / Rt17-B1), this protein is DNA mismatch repair protein MutL.